Here is a 75-residue protein sequence, read N- to C-terminus: Conotoxin VnMKLT2-012 (75 aa).

A signal peptide spans 1–23; that stretch reads MMKLTCVLIIAVLFLTACQLTTA. The propeptide occupies 24 to 45; that stretch reads ETRDEYRAVRSSDEVRNSRSTR. Basic and acidic residues predominate over residues 31 to 45; the sequence is AVRSSDEVRNSRSTR. Positions 31-50 are disordered; the sequence is AVRSSDEVRNSRSTRDCSGS. 3 disulfides stabilise this stretch: cysteine 47–cysteine 60, cysteine 54–cysteine 65, and cysteine 59–cysteine 74.

It belongs to the conotoxin O1 superfamily. As to expression, expressed by the venom duct.

The protein resides in the secreted. The polypeptide is Conotoxin VnMKLT2-012 (Conus ventricosus (Mediterranean cone)).